Here is a 285-residue protein sequence, read N- to C-terminus: Inhibitor of growth protein 5 (285 aa).

The interval Glu116–Met225 is disordered. Positions Lys131–Ser149 are enriched in basic residues. Over residues Asn160 to Gly178 the composition is skewed to low complexity. The segment at Pro232–Asp281 adopts a PHD-type zinc-finger fold. Zn(2+) contacts are provided by Cys235, Cys237, Cys248, Cys253, His259, Cys262, Cys275, and Cys278.

The protein belongs to the ING family. Component of the Enok complex composed of at least Br140, enok, Eaf6 and Ing5.

It is found in the nucleus. The protein localises to the chromosome. In terms of biological role, component of the Enok complex which has a histone H3 acetyltransferase activity. In Drosophila melanogaster (Fruit fly), this protein is Inhibitor of growth protein 5.